Here is a 317-residue protein sequence, read N- to C-terminus: Olfactory receptor 5K16 (317 aa).

The Extracellular portion of the chain corresponds to 1–28; that stretch reads MEKTNHSLTTQFILVGFSDHPDLKTPLF. N-linked (GlcNAc...) asparagine glycosylation is present at asparagine 5. The chain crosses the membrane as a helical span at residues 29 to 49; it reads LLFSVIYLVTMVGNLGLVAVI. Topologically, residues 50–56 are cytoplasmic; sequence YLEPRLH. Residues 57–77 form a helical membrane-spanning segment; it reads TPMYIFLGNLALMDSCCSCAI. At 78–93 the chain is on the extracellular side; sequence TPKILENFFSVDRRIS. The helical transmembrane segment at 94–114 threads the bilayer; it reads LYECMAQFYFLCLAETADCFL. Cysteine 97 and cysteine 189 are joined by a disulfide. At 115–144 the chain is on the cytoplasmic side; it reads LAAMAYDRYVAICNPLQYHSMMSKKLSIQM. The helical transmembrane segment at 145–165 threads the bilayer; that stretch reads SIGTFITSNLHSLIHVGCLLR. The Extracellular portion of the chain corresponds to 166 to 198; sequence LTFCKSNRIDHFFCDILPLYRLSCTDPFINELM. A helical transmembrane segment spans residues 199-219; it reads IYIFSMPIQVFTITTVLVSYF. At 220 to 239 the chain is on the cytoplasmic side; that stretch reads CILLTIFKMKSKDGRGKAFS. A helical membrane pass occupies residues 240 to 259; the sequence is TCASHFFSVSIFYVCLLMYI. At 260-268 the chain is on the extracellular side; the sequence is RPFDEGNKD. The helical transmembrane segment at 269–289 threads the bilayer; that stretch reads IPVAVFYTIIIPLLNPFIYSL. At 290–317 the chain is on the cytoplasmic side; sequence RNKEVVNAVKKVMKTHSIFKNASASMAR.

This sequence belongs to the G-protein coupled receptor 1 family.

Its subcellular location is the cell membrane. Functionally, potential odorant receptor. The chain is Olfactory receptor 5K16 from Mus musculus (Mouse).